The following is a 193-amino-acid chain: ECF RNA polymerase sigma factor SigK (193 aa).

Positions 35 to 101 are sigma-70 factor domain-2; it reads LYDRTRSRVY…RRAVDRVRSE (67 aa). Positions 59–62 match the Polymerase core binding motif; sequence ETTQ. The interval 140 to 187 is sigma-70 factor domain-4; the sequence is MGSLSDLQREAIQLAYYEGLTYVQVSERLSANLATIKSRMRGGIRGLK. Positions 161 to 180 form a DNA-binding region, H-T-H motif; the sequence is YVQVSERLSANLATIKSRMR.

It belongs to the sigma-70 factor family. ECF subfamily. In terms of assembly, interacts transiently with the RNA polymerase catalytic core formed by RpoA, RpoB, RpoC and RpoZ (2 alpha, 1 beta, 1 beta' and 1 omega subunit) to form the RNA polymerase holoenzyme that can initiate transcription. Interacts (via sigma-70 factor domain 4) with anti-sigma-K factor RskA.

Functionally, sigma factors are initiation factors that promote the attachment of RNA polymerase to specific initiation sites and are then released. Extracytoplasmic function (ECF) sigma factors are held in an inactive form by an anti-sigma factor until released by regulated intramembrane proteolysis. This chain is ECF RNA polymerase sigma factor SigK (sigK), found in Mycobacterium sp. (strain KMS).